The primary structure comprises 324 residues: Gamma-soluble NSF attachment protein (324 aa).

The span at 285-298 (NPTINSTAPQQQYS) shows a compositional bias: polar residues. A disordered region spans residues 285–324 (NPTINSTAPQQQYSNTTTTTTNNTNNNNPTSQQDDDEDVL). Positions 299–312 (NTTTTTTNNTNNNN) are enriched in low complexity.

Belongs to the SNAP family. In terms of assembly, interacts with nsfA and probably SNARE proteins.

The protein localises to the cytoplasmic vesicle membrane. In terms of biological role, may be required for vesicular transport between the endoplasmic reticulum and the Golgi apparatus. Involved in vesicle fusion with nsfA and probably SNARE proteins. The protein is Gamma-soluble NSF attachment protein (snpC) of Dictyostelium discoideum (Social amoeba).